A 476-amino-acid polypeptide reads, in one-letter code: Glycogen synthase (476 aa).

K15 lines the ADP-alpha-D-glucose pocket.

Belongs to the glycosyltransferase 1 family. Bacterial/plant glycogen synthase subfamily.

The catalysed reaction is [(1-&gt;4)-alpha-D-glucosyl](n) + ADP-alpha-D-glucose = [(1-&gt;4)-alpha-D-glucosyl](n+1) + ADP + H(+). Its pathway is glycan biosynthesis; glycogen biosynthesis. Its function is as follows. Synthesizes alpha-1,4-glucan chains using ADP-glucose. The sequence is that of Glycogen synthase from Streptococcus equi subsp. zooepidemicus (strain H70).